The sequence spans 504 residues: ATP synthase subunit alpha (504 aa).

Position 169 to 176 (169 to 176) interacts with ATP; that stretch reads GDRQTGKT.

The protein belongs to the ATPase alpha/beta chains family. F-type ATPases have 2 components, CF(1) - the catalytic core - and CF(0) - the membrane proton channel. CF(1) has five subunits: alpha(3), beta(3), gamma(1), delta(1), epsilon(1). CF(0) has three main subunits: a(1), b(2) and c(9-12). The alpha and beta chains form an alternating ring which encloses part of the gamma chain. CF(1) is attached to CF(0) by a central stalk formed by the gamma and epsilon chains, while a peripheral stalk is formed by the delta and b chains.

Its subcellular location is the cell membrane. It carries out the reaction ATP + H2O + 4 H(+)(in) = ADP + phosphate + 5 H(+)(out). Produces ATP from ADP in the presence of a proton gradient across the membrane. The alpha chain is a regulatory subunit. This Clostridium botulinum (strain Alaska E43 / Type E3) protein is ATP synthase subunit alpha.